The following is a 112-amino-acid chain: Ig kappa chain V-II region 2S1.3 (112 aa).

The tract at residues 1 to 23 is framework-1; that stretch reads DIVMTQAAFSNPVTLGTSASFSC. A disulfide bridge links Cys23 with Cys93. Residues 24-39 are complementarity-determining-1; that stretch reads RSSKSLQQSKGITYLY. The interval 40-54 is framework-2; that stretch reads WYLQKPGQSPQLLIY. Residues 55 to 61 are complementarity-determining-2; it reads QMSNLAS. The tract at residues 62 to 93 is framework-3; sequence GVPDRFSGSGSGTDFTLRISRVEAEDVGVYYC. The interval 94–102 is complementarity-determining-3; sequence ANLQELPYT. The interval 103–112 is framework-4; that stretch reads FGGGTKLEIK.

The sequence is that of Ig kappa chain V-II region 2S1.3 from Mus musculus (Mouse).